The primary structure comprises 331 residues: Probable deacetylase MTH_1194 (331 aa).

H118 functions as the Proton donor/acceptor in the catalytic mechanism. Zn(2+)-binding residues include D155, H157, and D244.

The protein belongs to the histone deacetylase family. Zn(2+) is required as a cofactor.

In terms of biological role, probable deacetylase. This is Probable deacetylase MTH_1194 from Methanothermobacter thermautotrophicus (strain ATCC 29096 / DSM 1053 / JCM 10044 / NBRC 100330 / Delta H) (Methanobacterium thermoautotrophicum).